Reading from the N-terminus, the 333-residue chain is tRNA (guanine(37)-N(1))/4-demethylwyosine(37)-methyltransferase Taw22 (333 aa).

Residues Arg-174, Phe-191, 213 to 214 (EI), and 243 to 244 (DV) each bind S-adenosyl-L-methionine.

Belongs to the class I-like SAM-binding methyltransferase superfamily. TRM5/TYW2 family.

It localises to the cytoplasm. It carries out the reaction guanosine(37) in tRNA + S-adenosyl-L-methionine = N(1)-methylguanosine(37) in tRNA + S-adenosyl-L-homocysteine + H(+). The enzyme catalyses 4-demethylwyosine(37) in tRNA(Phe) + S-adenosyl-L-methionine = isowyosine(37) in tRNA(Phe) + S-adenosyl-L-homocysteine + H(+). Functionally, catalyzes both the N1-methylation of guanosine and the C7-methylation of 4-demethylwyosine (imG-14) at position 37 in tRNA(Phe). The chain is tRNA (guanine(37)-N(1))/4-demethylwyosine(37)-methyltransferase Taw22 from Pyrococcus abyssi (strain GE5 / Orsay).